Consider the following 196-residue polypeptide: UPF0316 protein LBL_2483 (196 aa).

The next 3 helical transmembrane spans lie at 12-32, 44-64, and 70-90; these read YCVL…IGTI, IAAS…TQVI, and ALCY…GMIL.

This sequence belongs to the UPF0316 family.

The protein resides in the cell membrane. The protein is UPF0316 protein LBL_2483 of Leptospira borgpetersenii serovar Hardjo-bovis (strain L550).